The chain runs to 342 residues: N-acetyl-gamma-glutamyl-phosphate reductase (342 aa).

Cys149 is an active-site residue.

This sequence belongs to the NAGSA dehydrogenase family. Type 1 subfamily.

The protein localises to the cytoplasm. It carries out the reaction N-acetyl-L-glutamate 5-semialdehyde + phosphate + NADP(+) = N-acetyl-L-glutamyl 5-phosphate + NADPH + H(+). It functions in the pathway amino-acid biosynthesis; L-arginine biosynthesis; N(2)-acetyl-L-ornithine from L-glutamate: step 3/4. In terms of biological role, catalyzes the NADPH-dependent reduction of N-acetyl-5-glutamyl phosphate to yield N-acetyl-L-glutamate 5-semialdehyde. The protein is N-acetyl-gamma-glutamyl-phosphate reductase of Laribacter hongkongensis (strain HLHK9).